A 186-amino-acid polypeptide reads, in one-letter code: MIEASKLKAGMTFETADGKLIRVLEASHHKPGKGNTIMRMKLRDVRTGSTFDTSYRPEEKFEQAIIETVPAQYLYQMDDTAYFMNTETYDQYEIPVVNVEEELKFILENSDVKIQFYGTEVIGVTVPTTVELVVTDTQPSIKGATVTGSGKPATLETGLVVNVPDFIEVGQKLIINTAEGTYVSRA.

Belongs to the elongation factor P family.

The protein resides in the cytoplasm. It functions in the pathway protein biosynthesis; polypeptide chain elongation. Functionally, involved in peptide bond synthesis. Stimulates efficient translation and peptide-bond synthesis on native or reconstituted 70S ribosomes in vitro. Probably functions indirectly by altering the affinity of the ribosome for aminoacyl-tRNA, thus increasing their reactivity as acceptors for peptidyl transferase. This Streptococcus sanguinis (strain SK36) protein is Elongation factor P.